We begin with the raw amino-acid sequence, 302 residues long: Pyridoxal 5'-phosphate synthase subunit PdxS (302 aa).

D32 is a D-ribose 5-phosphate binding site. The active-site Schiff-base intermediate with D-ribose 5-phosphate is K89. Position 161 (G161) interacts with D-ribose 5-phosphate. R173 is a D-glyceraldehyde 3-phosphate binding site. D-ribose 5-phosphate is bound by residues G222 and 243 to 244 (GS). The disordered stretch occupies residues 278–302 (GIGKGMKGQSNEDLPDEEKLQGRGV).

The protein belongs to the PdxS/SNZ family. In the presence of PdxT, forms a dodecamer of heterodimers.

The catalysed reaction is aldehydo-D-ribose 5-phosphate + D-glyceraldehyde 3-phosphate + L-glutamine = pyridoxal 5'-phosphate + L-glutamate + phosphate + 3 H2O + H(+). It functions in the pathway cofactor biosynthesis; pyridoxal 5'-phosphate biosynthesis. Its function is as follows. Catalyzes the formation of pyridoxal 5'-phosphate from ribose 5-phosphate (RBP), glyceraldehyde 3-phosphate (G3P) and ammonia. The ammonia is provided by the PdxT subunit. Can also use ribulose 5-phosphate and dihydroxyacetone phosphate as substrates, resulting from enzyme-catalyzed isomerization of RBP and G3P, respectively. The protein is Pyridoxal 5'-phosphate synthase subunit PdxS of Halorubrum lacusprofundi (strain ATCC 49239 / DSM 5036 / JCM 8891 / ACAM 34).